Here is a 148-residue protein sequence, read N- to C-terminus: Large ribosomal subunit protein bL9 (148 aa).

The protein belongs to the bacterial ribosomal protein bL9 family.

Functionally, binds to the 23S rRNA. This chain is Large ribosomal subunit protein bL9, found in Pseudomonas putida (strain GB-1).